A 177-amino-acid polypeptide reads, in one-letter code: ATP-dependent protease subunit HslV (177 aa).

The active site involves Thr2. Residues Ala159, Asp162, and Thr165 each coordinate Na(+).

The protein belongs to the peptidase T1B family. HslV subfamily. In terms of assembly, a double ring-shaped homohexamer of HslV is capped on each side by a ring-shaped HslU homohexamer. The assembly of the HslU/HslV complex is dependent on binding of ATP.

The protein localises to the cytoplasm. The enzyme catalyses ATP-dependent cleavage of peptide bonds with broad specificity.. Allosterically activated by HslU binding. Its function is as follows. Protease subunit of a proteasome-like degradation complex believed to be a general protein degrading machinery. This chain is ATP-dependent protease subunit HslV, found in Lactobacillus leichmannii.